Here is a 206-residue protein sequence, read N- to C-terminus: Ribosomal RNA small subunit methyltransferase G (206 aa).

S-adenosyl-L-methionine contacts are provided by residues Gly71, Phe76, 125–126, and Arg139; that span reads IE.

This sequence belongs to the methyltransferase superfamily. RNA methyltransferase RsmG family.

It localises to the cytoplasm. The catalysed reaction is guanosine(527) in 16S rRNA + S-adenosyl-L-methionine = N(7)-methylguanosine(527) in 16S rRNA + S-adenosyl-L-homocysteine. Functionally, specifically methylates the N7 position of guanine in position 527 of 16S rRNA. The polypeptide is Ribosomal RNA small subunit methyltransferase G (Cereibacter sphaeroides (strain ATCC 17029 / ATH 2.4.9) (Rhodobacter sphaeroides)).